A 456-amino-acid polypeptide reads, in one-letter code: Phosphomethylpyrimidine synthase (456 aa).

Substrate is bound by residues asparagine 80, methionine 109, tyrosine 139, histidine 175, 195–197 (SRG), 236–239 (DSLR), and glutamate 275. Position 279 (histidine 279) interacts with Zn(2+). Tyrosine 302 is a substrate binding site. Histidine 343 is a Zn(2+) binding site. Residues cysteine 423, cysteine 426, and cysteine 431 each contribute to the [4Fe-4S] cluster site.

The protein belongs to the ThiC family. The cofactor is [4Fe-4S] cluster.

The enzyme catalyses 5-amino-1-(5-phospho-beta-D-ribosyl)imidazole + S-adenosyl-L-methionine = 4-amino-2-methyl-5-(phosphooxymethyl)pyrimidine + CO + 5'-deoxyadenosine + formate + L-methionine + 3 H(+). Its pathway is cofactor biosynthesis; thiamine diphosphate biosynthesis. In terms of biological role, catalyzes the synthesis of the hydroxymethylpyrimidine phosphate (HMP-P) moiety of thiamine from aminoimidazole ribotide (AIR) in a radical S-adenosyl-L-methionine (SAM)-dependent reaction. This is Phosphomethylpyrimidine synthase from Prochlorococcus marinus (strain MIT 9312).